We begin with the raw amino-acid sequence, 204 residues long: MLRELVKNKKLRARVLERAEEFKLNNRAEENVWFRELILCILTSNSSFISAYKALNYIMDEIFSLSEDQMSKRLRLAGYRFYNLKAKYIANARKLYGNLKTKIKPIADYSQEEARQYIINNIDGLGLKESSHFLRNVGYFDLAIIDRHVLHFLNEIGTSNLKIKNKKDYYLAESILKSISINLGIQVGLLDLYIFFKQTNTIVK.

Catalysis depends on residues Lys128 and Asp146.

Belongs to the type-2 OGG1 family.

The enzyme catalyses 2'-deoxyribonucleotide-(2'-deoxyribose 5'-phosphate)-2'-deoxyribonucleotide-DNA = a 3'-end 2'-deoxyribonucleotide-(2,3-dehydro-2,3-deoxyribose 5'-phosphate)-DNA + a 5'-end 5'-phospho-2'-deoxyribonucleoside-DNA + H(+). In terms of biological role, catalyzes the excision of an oxidatively damaged form of guanine (7,8-dihydro-8-oxoguanine = 8-oxoG) from DNA. Also cleaves the DNA backbone at apurinic/apyrimidinic sites (AP sites). The chain is 8-oxoguanine DNA glycosylase/AP lyase from Sulfurisphaera tokodaii (strain DSM 16993 / JCM 10545 / NBRC 100140 / 7) (Sulfolobus tokodaii).